Reading from the N-terminus, the 824-residue chain is Leucine--tRNA ligase (824 aa).

The 'HIGH' region motif lies at 42-52; the sequence is PYPSGKIHMGH. The 'KMSKS' region signature appears at 581-585; that stretch reads KMSKS. K584 is an ATP binding site.

This sequence belongs to the class-I aminoacyl-tRNA synthetase family.

The protein localises to the cytoplasm. It catalyses the reaction tRNA(Leu) + L-leucine + ATP = L-leucyl-tRNA(Leu) + AMP + diphosphate. This chain is Leucine--tRNA ligase, found in Citrifermentans bemidjiense (strain ATCC BAA-1014 / DSM 16622 / JCM 12645 / Bem) (Geobacter bemidjiensis).